A 572-amino-acid chain; its full sequence is Proline--tRNA ligase (572 aa).

It belongs to the class-II aminoacyl-tRNA synthetase family. ProS type 1 subfamily. In terms of assembly, homodimer.

It is found in the cytoplasm. It carries out the reaction tRNA(Pro) + L-proline + ATP = L-prolyl-tRNA(Pro) + AMP + diphosphate. In terms of biological role, catalyzes the attachment of proline to tRNA(Pro) in a two-step reaction: proline is first activated by ATP to form Pro-AMP and then transferred to the acceptor end of tRNA(Pro). As ProRS can inadvertently accommodate and process non-cognate amino acids such as alanine and cysteine, to avoid such errors it has two additional distinct editing activities against alanine. One activity is designated as 'pretransfer' editing and involves the tRNA(Pro)-independent hydrolysis of activated Ala-AMP. The other activity is designated 'posttransfer' editing and involves deacylation of mischarged Ala-tRNA(Pro). The misacylated Cys-tRNA(Pro) is not edited by ProRS. The protein is Proline--tRNA ligase of Cronobacter sakazakii (strain ATCC BAA-894) (Enterobacter sakazakii).